A 3902-amino-acid polypeptide reads, in one-letter code: Hybrid PKS-NRPS synthetase pynA (3902 aa).

Positions 1–25 (MDTPLSSSEISPRFSNTVPSSVSSM) are disordered. The 413-residue stretch at 29–441 (ADPSVIVGLA…GTNAHVILDA (413 aa)) folds into the Ketosynthase family 3 (KS3) domain. Catalysis depends on for beta-ketoacyl synthase activity residues Cys201, His324, and His362. Positions 555-868 (VFTGQGAQWF…PYLASLTRGV (314 aa)) are malonyl-CoA:ACP transacylase (MAT) domain. Ser647 acts as the For malonyltransferase activity in catalysis. Residues 945–1080 (HSILGARMPG…GLVSVETNAL (136 aa)) form an N-terminal hotdog fold region. The dehydratase (DH) domain stretch occupies residues 945-1256 (HSILGARMPG…LEVTALGSDK (312 aa)). In terms of domain architecture, PKS/mFAS DH spans 945–1258 (HSILGARMPG…VTALGSDKTD (314 aa)). His977 serves as the catalytic Proton acceptor; for dehydratase activity. The interval 1100-1258 (QESIPAETLY…VTALGSDKTD (159 aa)) is C-terminal hotdog fold. Asp1164 functions as the Proton donor; for dehydratase activity in the catalytic mechanism. The enoyl reductase (ER) domain stretch occupies residues 1629–1945 (GLLETLVFED…MGKHTGKVVL (317 aa)). Positions 1971-2143 (TYLLVGGLGG…AGTTMNCGMI (173 aa)) are ketoreductase (KR) domain. Residues 2251-2328 (ERTTLVLSAF…ALVTKASGLI (78 aa)) enclose the Carrier 1 domain. Ser2288 bears the O-(pantetheine 4'-phosphoryl)serine mark. Basic and acidic residues predominate over residues 2337-2350 (KAENVDNEGAKGNE). The interval 2337–2364 (KAENVDNEGAKGNEDQEVETQQGQLNQP) is disordered. Residues 2374-2816 (VPMSSFQQRL…AEVNLCGALE (443 aa)) are condensation (C) domain 7. Residues 2836–3248 (SVGVCQRIME…NGLLTFKGRI (413 aa)) are adenylation (A) domain 8. The Carrier 2 domain maps to 3391 to 3467 (GDDAEILQGV…AIAGMIQKQL (77 aa)). The residue at position 3427 (Ser3427) is an O-(pantetheine 4'-phosphoryl)serine. Residues 3515–3774 (LTGIDTFIGL…VDFLPVDALT (260 aa)) are thioesterase (TE) domain.

It in the C-terminal section; belongs to the NRP synthetase family.

It participates in secondary metabolite biosynthesis. Functionally, hybrid PKS-NRPS synthetase; part of the gene cluster that mediates the biosynthesis of pyranonigrins, a family of antioxidative compounds. The first step of pyranonigrins biosynthesis is performed by the hybrid PKS-NRPS synthetase that condenses 6 malonyl-CoA units to an acetyl starter unit, to form a 1,3,5-trioxotetradecane-6,8-dienyl-ACP. The enoyl reductase (ER) domain of pynA is likely to be functional during the first two rounds of polyketide chain extension, to generate the saturated C-C bonds of the alkyl side chain. PynA subsequently forms the amide bond between the acyl chain and L-serine. Although pynA has a terminal reductase domain, it appears to require the thioesterase pynI for the release of the straight-chain intermediate from pynA via the formation of a tetramic acid pyranonigrin J. The methyltransferase pynC then coverts pyranonigrin J to pyranonigrin I via N-methylation. The FAD-dependent monooxygenase pynG catalyzes an epoxidation-mediated cyclization to form the dihydro-gamma-pyrone moiety, followed by pynD-catalyzed oxidation of the alcohol to the ketone and enolization to yield the characteristic tetramic acid-fused gamma-pyrone core of pyranonigrin H. Pyranonigrin H is substrate of pynH for dehydration-mediated exo-methylene formation from the serine side chain to produce pyranonigrin E, before the oxidase pynE reduces the exo-methylene of pyranonigrin E into a pendant methyl to form pyranonigrin G. The FAD-linked oxidoreductase pynB performs the reverse reaction and converts pyranonigrin G back to pyranonigrin E. This is Hybrid PKS-NRPS synthetase pynA from Aspergillus niger (strain ATCC MYA-4892 / CBS 513.88 / FGSC A1513).